A 486-amino-acid chain; its full sequence is Transmembrane protein 39A (486 aa).

Asn31 is a glycosylation site (N-linked (GlcNAc...) asparagine). Transmembrane regions (helical) follow at residues 72-92, 110-130, 155-175, 182-202, 285-305, 317-337, 418-438, and 444-464; these read SLFFEFLFFIYLLIVLFIQYI, TSLNFHLIDYYLAAFITVMLA, LILARLVLLTLCGWVLCWTLV, SVLNLLFLGYPFGVYVPLYCF, EVLFNSLFSAYYVAFLPLCFV, CEHLIMVWINAFVMLTTQLLP, VLNLLILIEGSVVFYQLYSLL, and NHTLSMALILFCNYYVLFKLL.

The protein belongs to the TMEM39 family. In terms of assembly, interacts with SACM1L, SEC23A and SEC24A.

It is found in the endoplasmic reticulum membrane. In terms of biological role, regulates autophagy by controlling the spatial distribution and levels of the intracellular phosphatidylinositol 4-phosphate (PtdIns(4)P) pools. Modulates (PtdIns(4)P) levels by regulating the ER-to-Golgi trafficking of the phosphatidylinositide phosphatase SACM1L. The chain is Transmembrane protein 39A (Tmem39a) from Mus musculus (Mouse).